Reading from the N-terminus, the 196-residue chain is HTH-type transcriptional regulator BetI (196 aa).

The HTH tetR-type domain occupies 8 to 68 (PVRREQLIRA…AAMRQILREL (61 aa)). A DNA-binding region (H-T-H motif) is located at residues 31-50 (TVATIAKKAGLSSGIVAHYF).

It participates in amine and polyamine biosynthesis; betaine biosynthesis via choline pathway [regulation]. Its function is as follows. Repressor involved in the biosynthesis of the osmoprotectant glycine betaine. It represses transcription of the choline transporter BetT and the genes of BetAB involved in the synthesis of glycine betaine. The sequence is that of HTH-type transcriptional regulator BetI from Stenotrophomonas maltophilia (strain R551-3).